Here is a 258-residue protein sequence, read N- to C-terminus: Acyl-[acyl-carrier-protein]--UDP-N-acetylglucosamine O-acyltransferase (258 aa).

Belongs to the transferase hexapeptide repeat family. LpxA subfamily. Homotrimer.

It localises to the cytoplasm. It catalyses the reaction a (3R)-hydroxyacyl-[ACP] + UDP-N-acetyl-alpha-D-glucosamine = a UDP-3-O-[(3R)-3-hydroxyacyl]-N-acetyl-alpha-D-glucosamine + holo-[ACP]. Its pathway is glycolipid biosynthesis; lipid IV(A) biosynthesis; lipid IV(A) from (3R)-3-hydroxytetradecanoyl-[acyl-carrier-protein] and UDP-N-acetyl-alpha-D-glucosamine: step 1/6. Involved in the biosynthesis of lipid A, a phosphorylated glycolipid that anchors the lipopolysaccharide to the outer membrane of the cell. This is Acyl-[acyl-carrier-protein]--UDP-N-acetylglucosamine O-acyltransferase from Pseudomonas syringae pv. tomato (strain ATCC BAA-871 / DC3000).